The following is a 111-amino-acid chain: Disintegrin subunit alpha (111 aa).

A signal peptide spans 1–20 (MIQVLLVTICLAVFPYQGSS). Positions 21-44 (IILESGNVNDYEVVYPRKITPLPK) are excised as a propeptide. The 67-residue stretch at 45–111 (GAVQPKNPCC…GDCPRKHFYA (67 aa)) folds into the Disintegrin domain. 4 disulfide bridges follow: cysteine 53/cysteine 76, cysteine 67/cysteine 73, cysteine 72/cysteine 97, and cysteine 85/cysteine 104. The short motif at 89–91 (RGD) is the Cell attachment site element. A propeptide spanning residues 110–111 (YA) is cleaved from the precursor.

This sequence belongs to the disintegrin family. Dimeric disintegrin subfamily. As to quaternary structure, heterodimer with subunit beta; disulfide-linked. Expressed by the venom gland.

Its subcellular location is the secreted. Functionally, acts by binding to alpha-IIb/beta-3 (ITGA2B/ITGB3) on the platelet surface and inhibits both ADP-induced platelet aggregation and platelet aggregate dissociation in human platelet-rich plasma. This chain is Disintegrin subunit alpha, found in Agkistrodon piscivorus leucostoma (Western cottonmouth).